The chain runs to 229 residues: Vitellogenin (229 aa).

The VWFD domain maps to 1–136 (IVMLKNDNVE…SWILAAESCR (136 aa)). N-linked (GlcNAc...) asparagine glycosylation is present at Asn198.

Expressed in liver, ovary and, to a lesser extent, in muscle, intestine, skin, kidney and heart.

In terms of biological role, precursor of the egg-yolk proteins that are sources of nutrients during early development of oviparous organisms. Its function is as follows. Probably binds tetrodotoxin in the ovary. This chain is Vitellogenin, found in Takifugu pardalis (Panther puffer).